Here is a 136-residue protein sequence, read N- to C-terminus: Large ribosomal subunit protein uL16 (136 aa).

Belongs to the universal ribosomal protein uL16 family. Part of the 50S ribosomal subunit.

In terms of biological role, binds 23S rRNA and is also seen to make contacts with the A and possibly P site tRNAs. This is Large ribosomal subunit protein uL16 from Rickettsia bellii (strain OSU 85-389).